We begin with the raw amino-acid sequence, 423 residues long: Transducer protein Htr13 (423 aa).

The segment covering 1-19 has biased composition (polar residues); it reads MTGPDNSLTDPSASPSTPV. The interval 1–21 is disordered; the sequence is MTGPDNSLTDPSASPSTPVAS. Positions 152-388 constitute a Methyl-accepting transducer domain; it reads AVAELIERAR…ELTMMIDEAA (237 aa).

The protein belongs to the methyl-accepting chemotaxis (MCP) protein family. In terms of processing, methylated by CheR.

The protein localises to the cytoplasm. Potentially involved in chemo- or phototactic signal transduction. This chain is Transducer protein Htr13 (htr13), found in Halobacterium salinarum (strain ATCC 29341 / DSM 671 / R1).